The following is a 243-amino-acid chain: Small ribosomal subunit protein eS4 (243 aa).

In terms of domain architecture, S4 RNA-binding spans 43-105; sequence IPLLYIVRDY…TGEHYRVLPN (63 aa).

The protein belongs to the eukaryotic ribosomal protein eS4 family.

The polypeptide is Small ribosomal subunit protein eS4 (rps4e) (Pyrococcus abyssi (strain GE5 / Orsay)).